A 122-amino-acid polypeptide reads, in one-letter code: Holo-[acyl-carrier-protein] synthase (122 aa).

D8 and E56 together coordinate Mg(2+).

This sequence belongs to the P-Pant transferase superfamily. AcpS family. It depends on Mg(2+) as a cofactor.

The protein localises to the cytoplasm. It carries out the reaction apo-[ACP] + CoA = holo-[ACP] + adenosine 3',5'-bisphosphate + H(+). Its function is as follows. Transfers the 4'-phosphopantetheine moiety from coenzyme A to a Ser of acyl-carrier-protein. The protein is Holo-[acyl-carrier-protein] synthase of Alkaliphilus oremlandii (strain OhILAs) (Clostridium oremlandii (strain OhILAs)).